A 541-amino-acid chain; its full sequence is Protein wntless homolog B (541 aa).

Over 1 to 15 the chain is Cytoplasmic; it reads MAGAIIENMSTKKLC. A helical transmembrane segment spans residues 16–36; the sequence is MVGVALLLLQVLAFLVGGLIA. Over 37–232 the chain is Lumenal; it reads PKPTTYVNPV…SIFQNGGFTM (196 aa). The chain crosses the membrane as a helical span at residues 233–253; sequence VWFAMKTFLTPCIIIIMIWYW. The Cytoplasmic segment spans residues 254 to 268; the sequence is RRITMMTRSPVLLEK. The chain crosses the membrane as a helical span at residues 269-289; sequence VIFALGISMTFINIPVEWFSI. The Lumenal portion of the chain corresponds to 290–303; that stretch reads GYDWTWMLLFGDIR. A helical transmembrane segment spans residues 304 to 324; sequence QGIFYAMLLSFWIIFCGEHMM. Residues 325-331 are Cytoplasmic-facing; it reads DQAERNR. The chain crosses the membrane as a helical span at residues 332–352; that stretch reads ISIYWKQVGPIAFGSCCLFIF. The Lumenal portion of the chain corresponds to 353–379; sequence DMCERGVQLKNPFYSIWTTDVGAEIAM. The helical transmembrane segment at 380 to 400 threads the bilayer; the sequence is AFIIVAGICACLYFLFLCFMV. Topologically, residues 401–431 are cytoplasmic; sequence YQVFRNISGKRSNLPAMSKARRLHYEGLIFR. The chain crosses the membrane as a helical span at residues 432 to 452; that stretch reads FKFLMIITLACAALTVVFFIT. Residues 453–471 are Lumenal-facing; the sequence is TQITEGNWKLGDLSIELNS. A helical transmembrane segment spans residues 472–492; it reads AFFTGIYGMWNLYVFALMFLY. The Cytoplasmic portion of the chain corresponds to 493–541; that stretch reads APSHKHYGDGQSNDGAGMSSGEELQLTTTITHIDGPTELYRLAGKEAQE.

Belongs to the wntless family. Enriched in the animal hemisphere of the early cleavage embryo, where expression persists until the late gastrula stage. At the neurula stage, strongly expressed at the border of the neural plate and dorsal midline. After the neurula stage, expressed in various organs, including the eye, liver, heart, pronephros, otic vesicle, and dorsal neural tube. Expression in the developing eye is dynamic; expressed in the eye field from stages 23 to 27, and from stage 30 expression is confined to distinct regions including the central part and border of the eye.

It is found in the golgi apparatus membrane. The protein resides in the cytoplasmic vesicle membrane. In terms of biological role, required for a subset of Wnt-dependent developmental processes, in particular, eye and pronephros development. Regulates the secretion of wnt4, which is required for eye development. The chain is Protein wntless homolog B (wls-b) from Xenopus laevis (African clawed frog).